The sequence spans 117 residues: MKGNIGIAVFYMLLLLLPTDSIGKKMEEEQEKLFRQKRNPLIPAIYIGATVGPSVWAYLVALVGAAAVTAANIRRASSDNHSCAGNRGWCRSKCFRHEYVDTYYSAVCGRYFCCRSR.

The N-terminal stretch at Met1 to Gly23 is a signal peptide. A propeptide spanning residues Met26 to Gln36 is cleaved from the precursor. 3 cysteine pairs are disulfide-bonded: Cys83–Cys113, Cys90–Cys108, and Cys94–Cys114.

It belongs to the big defensin family. Interacts with intracellular coagulation inhibitor 1/LICI-1. As to expression, expressed in all tissues examined, including hemocytes, heart, hepatopancreas, stomach, intestine and skeletal muscle.

It is found in the secreted. Its function is as follows. Significantly inhibits the growth of Gram-negative and Gram-positive bacteria and fungi in vitro. The sequence is that of Big defensin from Tachypleus tridentatus (Japanese horseshoe crab).